The chain runs to 532 residues: Germ cell nuclear acidic-1 protein (532 aa).

The segment covering 1–10 (MPTPFRDLHN) has biased composition (basic and acidic residues). Disordered regions lie at residues 1-50 (MPTP…EPIS), 84-181 (REAP…GNFE), and 213-253 (YISE…DRKQ). The segment covering 14 to 32 (ASASSYETAWSSSFSSRRS) has biased composition (low complexity). 3 stretches are compositionally biased toward basic and acidic residues: residues 39-48 (SNLKEIKDEP), 94-107 (LLQK…RDML), and 124-133 (KPKEVKKALK). A compositionally biased stretch (acidic residues) spans 213–235 (YISEESSEEESEEEEEDVDDEEY). The segment covering 236–251 (RESSPEVEAKISYSDR) has biased composition (basic and acidic residues). One can recognise a SprT-like domain in the interval 308–398 (RRIFSAIPSE…GARCSSVFKS (91 aa)). Residues 468–489 (AKPVGPILSNSSKPSPPAPRRI) are disordered.

It belongs to the serine-aspartate repeat-containing protein (SDr) family. Interacts with top-2; this interaction allows the resolution of topoisomerase II (top-2) DNA-protein cross-links. Mainly expressed in germ cells and early embryonic, proliferating cells.

The protein localises to the chromosome. Functionally, may play a role in DNA-protein cross-links (DPCs) clearance through a SUMO-dependent recruitment to sites of DPCs, ensuring the genomic stability by protecting germ cells and early embryos from various sources of damage. May resolve the topoisomerase II (top-2) DPCs. Limits replication stress and DNA double-strand breaks. The protein is Germ cell nuclear acidic-1 protein of Caenorhabditis elegans.